A 397-amino-acid polypeptide reads, in one-letter code: LIM/homeobox protein Lhx9 (397 aa).

LIM zinc-binding domains are found at residues 69–130 (ALCA…RFSV) and 131–193 (QRCA…LLQG). Disordered stretches follow at residues 248–272 (ENEADHLDRDQQPYPPSQKTKRMRT), 330–365 (ENGGVDKADGTSLPAPPSADSGALTPPGTATTLTDL), and 378–397 (SNMDSHEPGSPSQTTLTNLF). Residues 267-326 (TKRMRTSFKHHQLRTMKSYFAINHNPDAKDLKQLAQKTGLTKRVLQVWFQNARAKFRRNL) constitute a DNA-binding region (homeobox). A compositionally biased stretch (low complexity) spans 353 to 365 (LTPPGTATTLTDL). Polar residues predominate over residues 387–397 (SPSQTTLTNLF).

Interacts with LDB1 and LDB2. Expressed in the dorsal thalamus and inner nuclei of the cerebellum.

Its subcellular location is the nucleus. In terms of biological role, involved in gonadal development. The protein is LIM/homeobox protein Lhx9 (Lhx9) of Mus musculus (Mouse).